Here is a 291-residue protein sequence, read N- to C-terminus: 4-hydroxy-tetrahydrodipicolinate synthase (291 aa).

T44 provides a ligand contact to pyruvate. Y132 acts as the Proton donor/acceptor in catalysis. Residue K161 is the Schiff-base intermediate with substrate of the active site. I202 is a binding site for pyruvate.

It belongs to the DapA family. As to quaternary structure, homotetramer; dimer of dimers.

The protein resides in the cytoplasm. The enzyme catalyses L-aspartate 4-semialdehyde + pyruvate = (2S,4S)-4-hydroxy-2,3,4,5-tetrahydrodipicolinate + H2O + H(+). It participates in amino-acid biosynthesis; L-lysine biosynthesis via DAP pathway; (S)-tetrahydrodipicolinate from L-aspartate: step 3/4. Functionally, catalyzes the condensation of (S)-aspartate-beta-semialdehyde [(S)-ASA] and pyruvate to 4-hydroxy-tetrahydrodipicolinate (HTPA). The polypeptide is 4-hydroxy-tetrahydrodipicolinate synthase (Endomicrobium trichonymphae).